A 449-amino-acid polypeptide reads, in one-letter code: Doublesex- and mab-3-related transcription factor A2 (449 aa).

Positions C57–R104 form a DNA-binding region, DM. Positions F163–H259 are disordered. Positions T166–D187 are enriched in polar residues. Positions G230–G240 are enriched in low complexity. Positions M260 to Q295 constitute a DMA domain.

The protein belongs to the DMRT family. As to expression, expressed in brain and eye.

It is found in the nucleus. In terms of biological role, may be involved in sexual development. This Xiphophorus maculatus (Southern platyfish) protein is Doublesex- and mab-3-related transcription factor A2 (dmrta2).